The sequence spans 166 residues: Crossover junction endodeoxyribonuclease RuvC (166 aa).

Active-site residues include Asp-9, Glu-70, and Asp-144. The Mg(2+) site is built by Asp-9, Glu-70, and Asp-144.

The protein belongs to the RuvC family. In terms of assembly, homodimer which binds Holliday junction (HJ) DNA. The HJ becomes 2-fold symmetrical on binding to RuvC with unstacked arms; it has a different conformation from HJ DNA in complex with RuvA. In the full resolvosome a probable DNA-RuvA(4)-RuvB(12)-RuvC(2) complex forms which resolves the HJ. Mg(2+) is required as a cofactor.

The protein resides in the cytoplasm. It catalyses the reaction Endonucleolytic cleavage at a junction such as a reciprocal single-stranded crossover between two homologous DNA duplexes (Holliday junction).. The RuvA-RuvB-RuvC complex processes Holliday junction (HJ) DNA during genetic recombination and DNA repair. Endonuclease that resolves HJ intermediates. Cleaves cruciform DNA by making single-stranded nicks across the HJ at symmetrical positions within the homologous arms, yielding a 5'-phosphate and a 3'-hydroxyl group; requires a central core of homology in the junction. The consensus cleavage sequence is 5'-(A/T)TT(C/G)-3'. Cleavage occurs on the 3'-side of the TT dinucleotide at the point of strand exchange. HJ branch migration catalyzed by RuvA-RuvB allows RuvC to scan DNA until it finds its consensus sequence, where it cleaves and resolves the cruciform DNA. This Neorickettsia sennetsu (strain ATCC VR-367 / Miyayama) (Ehrlichia sennetsu) protein is Crossover junction endodeoxyribonuclease RuvC.